The following is a 249-amino-acid chain: tRNA (guanine-N(1)-)-methyltransferase (249 aa).

S-adenosyl-L-methionine contacts are provided by residues glycine 121 and 141 to 146 (LGDFVL).

Belongs to the RNA methyltransferase TrmD family. Homodimer.

The protein localises to the cytoplasm. It catalyses the reaction guanosine(37) in tRNA + S-adenosyl-L-methionine = N(1)-methylguanosine(37) in tRNA + S-adenosyl-L-homocysteine + H(+). Specifically methylates guanosine-37 in various tRNAs. The sequence is that of tRNA (guanine-N(1)-)-methyltransferase from Cereibacter sphaeroides (strain KD131 / KCTC 12085) (Rhodobacter sphaeroides).